A 258-amino-acid chain; its full sequence is Ribosomal RNA small subunit methyltransferase A (258 aa).

Positions 13, 15, 40, 61, 85, and 106 each coordinate S-adenosyl-L-methionine.

The protein belongs to the class I-like SAM-binding methyltransferase superfamily. rRNA adenine N(6)-methyltransferase family. RsmA subfamily.

The protein localises to the cytoplasm. The catalysed reaction is adenosine(1518)/adenosine(1519) in 16S rRNA + 4 S-adenosyl-L-methionine = N(6)-dimethyladenosine(1518)/N(6)-dimethyladenosine(1519) in 16S rRNA + 4 S-adenosyl-L-homocysteine + 4 H(+). Functionally, specifically dimethylates two adjacent adenosines (A1518 and A1519) in the loop of a conserved hairpin near the 3'-end of 16S rRNA in the 30S particle. May play a critical role in biogenesis of 30S subunits. The polypeptide is Ribosomal RNA small subunit methyltransferase A (Porphyromonas gingivalis (strain ATCC 33277 / DSM 20709 / CIP 103683 / JCM 12257 / NCTC 11834 / 2561)).